We begin with the raw amino-acid sequence, 417 residues long: 3-ketoacyl-CoA thiolase, peroxisomal (417 aa).

Residues 1–15 (MSQRLQSIKDHLVES) constitute a peroxisome transit peptide. Residues 1–15 (MSQRLQSIKDHLVES) form a PTS2-type peroxisomal targeting signal region. Cys-125 (acyl-thioester intermediate) is an active-site residue. Catalysis depends on proton acceptor residues His-375 and Cys-403.

It belongs to the thiolase-like superfamily. Thiolase family. As to quaternary structure, homodimer. Interacts (via PTS2-type peroxisomal targeting signal region) with PEX7; leading to its translocation into peroxisomes.

The protein localises to the peroxisome. It localises to the mitochondrion intermembrane space. The enzyme catalyses an acyl-CoA + acetyl-CoA = a 3-oxoacyl-CoA + CoA. The protein operates within lipid metabolism; fatty acid metabolism. In terms of biological role, responsible for the thiolytic cleavage of straight chain 3-keto fatty acyl-CoAs (3-oxoacyl-CoAs). In Saccharomyces cerevisiae (strain ATCC 204508 / S288c) (Baker's yeast), this protein is 3-ketoacyl-CoA thiolase, peroxisomal (POT1).